The following is a 250-amino-acid chain: Troponin I 1 (250 aa).

2 disordered regions span residues Met1–Lys59 and Ser194–Glu250. Basic and acidic residues-rich tracts occupy residues Asp21–Gln45 and Asp206–Ser221. Over residues Pro229–Glu250 the composition is skewed to acidic residues.

Belongs to the troponin I family. In terms of tissue distribution, strongly expressed in body wall muscle during embryogenesis, reduces during the larval stages to adult. In late-stage larvae and adults, expression is evident in the proximal gonad of both hermaphrodites and males.

Troponin I is the inhibitory subunit of troponin, the thin filament regulatory complex which confers calcium-sensitivity to muscle actomyosin ATPase activity. This is Troponin I 1 (tni-1) from Caenorhabditis elegans.